The sequence spans 251 residues: Hydroxyacylglutathione hydrolase (251 aa).

The Zn(2+) site is built by H53, H55, D57, H58, H110, D127, and H165.

This sequence belongs to the metallo-beta-lactamase superfamily. Glyoxalase II family. Monomer. Zn(2+) serves as cofactor.

It catalyses the reaction an S-(2-hydroxyacyl)glutathione + H2O = a 2-hydroxy carboxylate + glutathione + H(+). It participates in secondary metabolite metabolism; methylglyoxal degradation; (R)-lactate from methylglyoxal: step 2/2. In terms of biological role, thiolesterase that catalyzes the hydrolysis of S-D-lactoyl-glutathione to form glutathione and D-lactic acid. The sequence is that of Hydroxyacylglutathione hydrolase from Shigella boydii serotype 18 (strain CDC 3083-94 / BS512).